Here is a 662-residue protein sequence, read N- to C-terminus: Sporulation protein RMD8 (662 aa).

Disordered stretches follow at residues 1-136, 286-320, and 346-406; these read MSYK…RTSK, YELETSGNNNNANQDTTTVPDHLPNPVGQQDSFNP, and LKKE…QNDF. S2 bears the N-acetylserine mark. Positions 99 to 121 are enriched in basic and acidic residues; the sequence is SARREERLSSSSSDRPRQYERLS. Residues 286 to 304 show a composition bias toward polar residues; it reads YELETSGNNNNANQDTTTV. A compositionally biased stretch (low complexity) spans 383–395; sequence SSRSPASPSSIST. The helical transmembrane segment at 630-647 threads the bilayer; it reads VTWWFILVILFGVIFSLT.

It belongs to the RMD1/sif2 family.

It is found in the membrane. Its function is as follows. Required for sporulation. The chain is Sporulation protein RMD8 (RMD8) from Saccharomyces cerevisiae (strain ATCC 204508 / S288c) (Baker's yeast).